A 127-amino-acid polypeptide reads, in one-letter code: MRHRNSGRSFSRTSSHRKAMFSNMCCSLIEHELIRTTLPKAKDLRRYIEPLITVSKSDSVASRRRAFDILRSKSAVGKLFTDLGPRFAKRPGGYIRIIKCGYRDGDNAPMAIVELMDRPVISDDTEE.

It belongs to the bacterial ribosomal protein bL17 family. In terms of assembly, part of the 50S ribosomal subunit. Contacts protein L32.

This is Large ribosomal subunit protein bL17 from Legionella pneumophila (strain Lens).